Here is an 871-residue protein sequence, read N- to C-terminus: Probable LRR receptor-like serine/threonine-protein kinase At1g51810 (871 aa).

The signal sequence occupies residues 1–20; sequence MERHCLFFVIFSLILHLVQA. Over 21-512 the chain is Extracellular; it reads QDPIGFINLD…GRQIKSMTIP (492 aa). Asn93, Asn179, Asn229, Asn283, Asn295, Asn396, Asn410, Asn439, Asn458, Asn463, and Asn489 each carry an N-linked (GlcNAc...) asparagine glycan. 3 LRR repeats span residues 405–426, 429–449, and 453–474; these read IITSLNLSSSGLTGIIVLTIQN, NLQELDLSNNNLSGGVPEFLA, and SLLVINLSGNNLSGVVPQKLIE. Residues 513–533 form a helical membrane-spanning segment; it reads IVASIGSVVAFTVALMIFCVV. Topologically, residues 534–871 are cytoplasmic; sequence RKNNPSNDEA…FGTEVAPMAR (338 aa). A Phosphothreonine modification is found at Thr568. Residues 577 to 850 enclose the Protein kinase domain; sequence NNFQKILGKG…QVVFELKECL (274 aa). Residues 583-591 and Lys605 each bind ATP; that span reads LGKGGFGIV. Tyr650 bears the Phosphotyrosine mark. The active-site Proton acceptor is Asp702. The residue at position 736 (Ser736) is a Phosphoserine. Residues Thr737 and Thr742 each carry the phosphothreonine modification. Residue Tyr750 is modified to Phosphotyrosine.

This sequence belongs to the protein kinase superfamily. Ser/Thr protein kinase family.

It localises to the membrane. It carries out the reaction L-seryl-[protein] + ATP = O-phospho-L-seryl-[protein] + ADP + H(+). The enzyme catalyses L-threonyl-[protein] + ATP = O-phospho-L-threonyl-[protein] + ADP + H(+). In Arabidopsis thaliana (Mouse-ear cress), this protein is Probable LRR receptor-like serine/threonine-protein kinase At1g51810.